The following is a 134-amino-acid chain: Fluoride-specific ion channel FluC (134 aa).

A run of 4 helical transmembrane segments spans residues 7–27 (LAVA…TIMA), 38–58 (GTLL…IVLV), 69–89 (LFLF…AAES), and 110–130 (VGSL…LLGH). Na(+) is bound by residues G77 and T80.

The protein belongs to the fluoride channel Fluc/FEX (TC 1.A.43) family.

Its subcellular location is the cell inner membrane. It carries out the reaction fluoride(in) = fluoride(out). Its activity is regulated as follows. Na(+) is not transported, but it plays an essential structural role and its presence is essential for fluoride channel function. Its function is as follows. Fluoride-specific ion channel. Important for reducing fluoride concentration in the cell, thus reducing its toxicity. This Legionella pneumophila subsp. pneumophila (strain Philadelphia 1 / ATCC 33152 / DSM 7513) protein is Fluoride-specific ion channel FluC.